The primary structure comprises 205 residues: Ribosomal RNA small subunit methyltransferase G (205 aa).

S-adenosyl-L-methionine-binding positions include G66, F71, 119–120 (IE), and R135.

This sequence belongs to the methyltransferase superfamily. RNA methyltransferase RsmG family.

The protein localises to the cytoplasm. The enzyme catalyses guanosine(527) in 16S rRNA + S-adenosyl-L-methionine = N(7)-methylguanosine(527) in 16S rRNA + S-adenosyl-L-homocysteine. Its function is as follows. Specifically methylates the N7 position of guanine in position 527 of 16S rRNA. In Rhizobium leguminosarum bv. trifolii (strain WSM2304), this protein is Ribosomal RNA small subunit methyltransferase G.